We begin with the raw amino-acid sequence, 299 residues long: Hemolysin C homolog (299 aa).

2 consecutive CBS domains span residues 80 to 142 and 145 to 202; these read MVPR…NGRL and LIRK…IDDE.

The protein belongs to the UPF0053 family. Hemolysin C subfamily.

The protein is Hemolysin C homolog (tlyC) of Rickettsia rickettsii (strain Sheila Smith).